The sequence spans 441 residues: Inositol hexakisphosphate kinase 1 (441 aa).

The interval 100–175 (ETVEQDDTTE…MLDGNSGLSS (76 aa)) is disordered. Residues 113 to 123 (PRRKHSRRSLH) are compositionally biased toward basic residues. Low complexity predominate over residues 137 to 149 (SLSLETSESSQEA). The segment covering 150–160 (KSPKVELHSHS) has biased composition (basic and acidic residues). Ser-151 carries the phosphoserine modification. 220–228 (PCVLDLKMG) provides a ligand contact to substrate. The interval 370–392 (SSCGPSTSPSNTSPEAGPSSQPK) is disordered. Over residues 372–391 (CGPSTSPSNTSPEAGPSSQP) the composition is skewed to polar residues.

It belongs to the inositol phosphokinase (IPK) family.

It is found in the cytoplasm. Its subcellular location is the nucleus. It catalyses the reaction 1D-myo-inositol hexakisphosphate + ATP = 5-diphospho-1D-myo-inositol 1,2,3,4,6-pentakisphosphate + ADP. The enzyme catalyses 1-diphospho-1D-myo-inositol 2,3,4,5,6-pentakisphosphate + ATP + H(+) = 1,5-bis(diphospho)-1D-myo-inositol 2,3,4,6-tetrakisphosphate + ADP. Converts inositol hexakisphosphate (InsP6) to diphosphoinositol pentakisphosphate (InsP7/PP-InsP5). Converts 1,3,4,5,6-pentakisphosphate (InsP5) to PP-InsP4. The chain is Inositol hexakisphosphate kinase 1 (IP6K1) from Homo sapiens (Human).